Reading from the N-terminus, the 317-residue chain is Melanocyte-stimulating hormone receptor (317 aa).

The Extracellular portion of the chain corresponds to 1-37; sequence MPMQEPQRRLLGPFNSTRTGAPHLELSANQTGPWCLH. N-linked (GlcNAc...) asparagine glycans are attached at residues N15 and N29. The helical transmembrane segment at 38 to 63 threads the bilayer; the sequence is VSIPDGLFLSLGLVSLVENVLVVISI. The Cytoplasmic segment spans residues 64–72; it reads AKNQNLHSP. The helical transmembrane segment at 73–93 threads the bilayer; it reads MYYFICCLALSDLLVSVSIVL. Residues 94–118 lie on the Extracellular side of the membrane; that stretch reads ETTLILVLEAGALATRVTVVQQLDN. The helical transmembrane segment at 119–140 threads the bilayer; sequence VIDVLICASMVSSLCFLGAIAV. Over 141–163 the chain is Cytoplasmic; sequence DRYISIFYALRYHSIVTLPRARW. Residues 164 to 183 form a helical membrane-spanning segment; the sequence is AIVAIWVASISSSTLFVAYY. The Extracellular portion of the chain corresponds to 184–191; that stretch reads NHTAVLLC. Residues 192–211 traverse the membrane as a helical segment; sequence LVTFFLATLALMVVLYVHML. The Cytoplasmic portion of the chain corresponds to 212-240; that stretch reads ARAHQHAQAIAQLHKRQHLVHQGFRLKGA. The chain crosses the membrane as a helical span at residues 241 to 266; sequence ATLTILLGIFFLCWGPFFLYLTLIVL. The Extracellular portion of the chain corresponds to 267–279; that stretch reads CPKHPTCGCFFKN. The chain crosses the membrane as a helical span at residues 280 to 300; the sequence is LNLFLALIIFNSIVDPLIYAF. Over 301–317 the chain is Cytoplasmic; it reads RSQELRMTLKEVLLCSW. C315 carries the S-palmitoyl cysteine lipid modification.

Belongs to the G-protein coupled receptor 1 family. As to quaternary structure, interacts with MGRN1, but does not undergo MGRN1-mediated ubiquitination; this interaction competes with GNAS-binding and thus inhibits agonist-induced cAMP production. Interacts with OPN3; the interaction results in a decrease in MC1R-mediated cAMP signaling and ultimately a decrease in melanin production in melanocytes.

The protein resides in the cell membrane. Functionally, receptor for MSH (alpha, beta and gamma) and ACTH. The activity of this receptor is mediated by G proteins which activate adenylate cyclase. Mediates melanogenesis, the production of eumelanin (black/brown) and phaeomelanin (red/yellow), via regulation of cAMP signaling in melanocytes. The polypeptide is Melanocyte-stimulating hormone receptor (MC1R) (Chaetodipus penicillatus (Desert pocket mouse)).